Consider the following 460-residue polypeptide: MSAAPSVFLIDDDRDLRKAMQQTLELAGFTVSSFASATEALAGLSADFAGIVISDIRMPGMDGLALFRKILALDPDLPMILVTGHGDIPMAVQAIQDGAYDFIAKPFAADRLVQSARRAEEKRRLVMENRSLRRAAEAASEGLPLIGQTPVMERLRQTLKHIADTDVDVLVAGETGSGKEVVATLLHQWSRRRTGNFVALNCGALPETVIESELFGHEPGAFTGAVKKRIGRIEHASGGTLFLDEIEAMPPATQVKMLRVLEAREITPLGTNLTRPVDIRVVAAAKVDLGDPAARGDFREDLYYRLNVVTLSIPPLRERRDDIPLLFSHFLARASERFGREVPAISAAMRAYLATHSWPGNVRELSHFAERVALGVEGNLGVPAAAPASSGATLPERLERYEADILKQALTAHCGDVKETLQALGIPRKTFYDKLQRHGINRADYVERAGPGRPNAISKT.

Residues 6-120 (SVFLIDDDRD…RLVQSARRAE (115 aa)) enclose the Response regulatory domain. Asp-55 carries the 4-aspartylphosphate modification. The region spanning 145–374 (LIGQTPVMER…LSHFAERVAL (230 aa)) is the Sigma-54 factor interaction domain. Residues 173–180 (GETGSGKE) and 236–245 (ASGGTLFLDE) each bind ATP. An inter-domain linker region spans residues 332 to 345 (ARASERFGREVPAI). Positions 417–436 (VKETLQALGIPRKTFYDKLQ) form a DNA-binding region, H-T-H motif.

Post-translationally, phosphorylated by DctB.

The protein localises to the cytoplasm. In terms of biological role, member of the two-component regulatory system DctB/DctD involved in the transport of C4-dicarboxylates. When activated by DctB acts in conjunction with sigma-54 to activate the transcription of dctA. This chain is C4-dicarboxylate transport transcriptional regulatory protein DctD (dctD), found in Rhizobium meliloti (strain 1021) (Ensifer meliloti).